Reading from the N-terminus, the 306-residue chain is tRNA pseudouridine synthase B (306 aa).

Residue D39 is the Nucleophile of the active site.

Belongs to the pseudouridine synthase TruB family. Type 1 subfamily.

The catalysed reaction is uridine(55) in tRNA = pseudouridine(55) in tRNA. Functionally, responsible for synthesis of pseudouridine from uracil-55 in the psi GC loop of transfer RNAs. This Arthrobacter sp. (strain FB24) protein is tRNA pseudouridine synthase B.